The sequence spans 410 residues: DNA replication and repair protein RecF (410 aa).

An ATP-binding site is contributed by 30-37; it reads GPNGHGKT.

The protein belongs to the RecF family.

It localises to the cytoplasm. The RecF protein is involved in DNA metabolism; it is required for DNA replication and normal SOS inducibility. RecF binds preferentially to single-stranded, linear DNA. It also seems to bind ATP. This is DNA replication and repair protein RecF from Rhodococcus opacus (strain B4).